The chain runs to 955 residues: GPI inositol-deacylase B (955 aa).

Asparagine 7 carries an N-linked (GlcNAc...) asparagine glycan. Residues alanine 8–histidine 28 form a helical membrane-spanning segment. The active site involves serine 180. N-linked (GlcNAc...) asparagine glycosylation occurs at asparagine 431. 4 helical membrane-spanning segments follow: residues isoleucine 489 to valine 509, leucine 600 to tyrosine 620, tyrosine 643 to isoleucine 663, and proline 703 to valine 723. Asparagine 753 is a glycosylation site (N-linked (GlcNAc...) asparagine). A run of 3 helical transmembrane segments spans residues valine 772–alanine 792, threonine 840–valine 860, and isoleucine 870–leucine 890. N-linked (GlcNAc...) asparagine glycosylation is present at asparagine 914. A helical membrane pass occupies residues glycine 919–isoleucine 939. N-linked (GlcNAc...) asparagine glycosylation occurs at asparagine 945.

This sequence belongs to the GPI inositol-deacylase family.

The protein resides in the endoplasmic reticulum membrane. Its function is as follows. Involved in inositol deacylation of GPI-anchored proteins which plays important roles in the quality control and ER-associated degradation of GPI-anchored proteins. The polypeptide is GPI inositol-deacylase B (BST1B) (Yarrowia lipolytica (strain CLIB 122 / E 150) (Yeast)).